The following is a 1005-amino-acid chain: uncharacterized protein (1005 aa).

A signal peptide spans M1–A24. C25 is lipidated: N-palmitoyl cysteine. C25 carries the S-diacylglycerol cysteine lipid modification. Disordered stretches follow at residues K105–F165 and T786–V825. 2 stretches are compositionally biased toward low complexity: residues T110 to S131 and Q145 to S156. Over residues T786–V801 the composition is skewed to polar residues.

It localises to the cell membrane. This is an uncharacterized protein from Mycoplasma pneumoniae (strain ATCC 29342 / M129 / Subtype 1) (Mycoplasmoides pneumoniae).